Here is a 285-residue protein sequence, read N- to C-terminus: Polyamine aminopropyltransferase (285 aa).

The PABS domain occupies 2–237; that stretch reads QMWFSQYHTV…GYWLFGFASK (236 aa). S-methyl-5'-thioadenosine is bound at residue glutamine 31. Aspartate 86 lines the spermidine pocket. Residues glutamate 106 and 137–138 contribute to the S-methyl-5'-thioadenosine site; that span reads DG. The Proton acceptor role is filled by aspartate 155. Position 155 to 158 (155 to 158) interacts with spermidine; it reads DSTD.

The protein belongs to the spermidine/spermine synthase family. In terms of assembly, homodimer or homotetramer.

The protein localises to the cytoplasm. The enzyme catalyses S-adenosyl 3-(methylsulfanyl)propylamine + putrescine = S-methyl-5'-thioadenosine + spermidine + H(+). It participates in amine and polyamine biosynthesis; spermidine biosynthesis; spermidine from putrescine: step 1/1. Functionally, catalyzes the irreversible transfer of a propylamine group from the amino donor S-adenosylmethioninamine (decarboxy-AdoMet) to putrescine (1,4-diaminobutane) to yield spermidine. This Agathobacter rectalis (strain ATCC 33656 / DSM 3377 / JCM 17463 / KCTC 5835 / VPI 0990) (Eubacterium rectale) protein is Polyamine aminopropyltransferase.